A 478-amino-acid chain; its full sequence is MQVTETTSEGLKREFQVLLPANELEDRLNTELSNIKGKVQIKGFRPGKVPVAHLRKVYGKSVMADVLQNAVNEANQQIVSDKGLRLALEPQIEFPKDEEQTIIERALDAKGDLAFKVKLEVLPSFELADLSDVSIKKLVLKPSDEEVNETLERMAKDSRSFEPREEGAEAQSGDRVTIDFVGRIDGTEFEGGKGEDVDLELGSNTFIPGFEDQLVGAKVGDARLVKVAFPADYQAEQLAGKDAEFDVTVKAVAAPGETKIDDELAKRFGMDDLEKLKEAVSKAVGADYEAQSRRKLKKELLDALDGKYAFDLPPSLVHQEFAAVWAQVEQDLKNRGKTFEDEGTTEEASQAEYRKIAERRVRLGLVLAQVGETADIKVSDDEVNQALFARIRQFPGQEKQVYDFYRNNPQALAELRAPLFEEKVVDHVLGQVQVVEEPVSKEALFAEDDEADAVTGAAATDEKPSESSNEAAADKAAG.

A compositionally biased stretch (basic and acidic residues) spans 154–167 (MAKDSRSFEPREEG). Disordered stretches follow at residues 154 to 173 (MAKDSRSFEPREEGAEAQSG) and 444 to 478 (LFAEDDEADAVTGAAATDEKPSESSNEAAADKAAG). Positions 173–258 (GDRVTIDFVG…VKAVAAPGET (86 aa)) constitute a PPIase FKBP-type domain.

This sequence belongs to the FKBP-type PPIase family. Tig subfamily.

It localises to the cytoplasm. The enzyme catalyses [protein]-peptidylproline (omega=180) = [protein]-peptidylproline (omega=0). In terms of biological role, involved in protein export. Acts as a chaperone by maintaining the newly synthesized protein in an open conformation. Functions as a peptidyl-prolyl cis-trans isomerase. This Methylorubrum populi (strain ATCC BAA-705 / NCIMB 13946 / BJ001) (Methylobacterium populi) protein is Trigger factor.